Here is a 309-residue protein sequence, read N- to C-terminus: Ribosomal RNA large subunit methyltransferase F (309 aa).

This sequence belongs to the methyltransferase superfamily. METTL16/RlmF family.

The protein resides in the cytoplasm. It catalyses the reaction adenosine(1618) in 23S rRNA + S-adenosyl-L-methionine = N(6)-methyladenosine(1618) in 23S rRNA + S-adenosyl-L-homocysteine + H(+). Functionally, specifically methylates the adenine in position 1618 of 23S rRNA. The protein is Ribosomal RNA large subunit methyltransferase F of Cronobacter sakazakii (strain ATCC BAA-894) (Enterobacter sakazakii).